The chain runs to 119 residues: uncharacterized protein (119 aa).

Residues Met-1–Cys-22 are disordered.

This is an uncharacterized protein from Saccharomyces cerevisiae (strain ATCC 204508 / S288c) (Baker's yeast).